The chain runs to 348 residues: Dihydroorotase (348 aa).

Residues histidine 14 and histidine 16 each coordinate Zn(2+). Residues 16-18 (HLR) and asparagine 42 each bind substrate. Zn(2+)-binding residues include lysine 100, histidine 137, and histidine 175. N6-carboxylysine is present on lysine 100. Histidine 137 contributes to the substrate binding site. Position 220 (leucine 220) interacts with substrate. Aspartate 248 contacts Zn(2+). Aspartate 248 is an active-site residue. Residues histidine 252 and alanine 264 each coordinate substrate.

Belongs to the metallo-dependent hydrolases superfamily. DHOase family. Class II DHOase subfamily. In terms of assembly, homodimer. It depends on Zn(2+) as a cofactor.

The enzyme catalyses (S)-dihydroorotate + H2O = N-carbamoyl-L-aspartate + H(+). It participates in pyrimidine metabolism; UMP biosynthesis via de novo pathway; (S)-dihydroorotate from bicarbonate: step 3/3. Catalyzes the reversible cyclization of carbamoyl aspartate to dihydroorotate. In Pseudomonas fluorescens (strain Pf0-1), this protein is Dihydroorotase.